The following is a 247-amino-acid chain: F-box and leucine-rich protein 22 (247 aa).

The F-box domain maps to 6 to 52 (TMHITQLNRECLLHLFSFLDKDSRKSLARTCSQLHDVFEDPALWSLL). Disordered stretches follow at residues 124-154 (SPRR…PDHS) and 173-247 (GLGS…AFPQ). Pro residues predominate over residues 184–200 (ETPPAPGVSWGPPPPGA).

Directly interacts with SKP1 and CUL1. In terms of tissue distribution, enriched in cardiac muscle.

The protein resides in the cytoplasm. Its subcellular location is the myofibril. It is found in the sarcomere. It localises to the z line. The protein operates within protein modification; protein ubiquitination. Its function is as follows. Substrate-recognition component of the SCF (SKP1-CUL1-F-box protein)-type E3 ubiquitin ligase complex. Promotes ubiquitination of sarcomeric proteins alpha-actinin-2 (ACTN2) and filamin-C (FLNC). The protein is F-box and leucine-rich protein 22 (FBXL22) of Homo sapiens (Human).